Reading from the N-terminus, the 296-residue chain is Cytidine deaminase (296 aa).

2 CMP/dCMP-type deaminase domains span residues 47-167 (ELNE…FGPS) and 186-296 (DSND…VEPE). 88-90 (NIE) contacts substrate. H101 serves as a coordination point for Zn(2+). E103 functions as the Proton donor in the catalytic mechanism. Residues C128 and C131 each coordinate Zn(2+).

It belongs to the cytidine and deoxycytidylate deaminase family. As to quaternary structure, homodimer. It depends on Zn(2+) as a cofactor.

The catalysed reaction is cytidine + H2O + H(+) = uridine + NH4(+). It catalyses the reaction 2'-deoxycytidine + H2O + H(+) = 2'-deoxyuridine + NH4(+). In terms of biological role, this enzyme scavenges exogenous and endogenous cytidine and 2'-deoxycytidine for UMP synthesis. The sequence is that of Cytidine deaminase from Shewanella halifaxensis (strain HAW-EB4).